The primary structure comprises 165 residues: Plastocyanin, chloroplastic (165 aa).

The transit peptide at 1–66 directs the protein to the chloroplast; it reads MATVTSSAAV…AGILAGNAMA (66 aa). The 99-residue stretch at 67–165 folds into the Plastocyanin-like domain; it reads AEVLLGSSDG…AGMVGKVTVN (99 aa). Cu cation contacts are provided by histidine 103, cysteine 150, histidine 153, and methionine 158.

The protein belongs to the plastocyanin family. Requires Cu(2+) as cofactor.

Its subcellular location is the plastid. The protein resides in the chloroplast thylakoid membrane. Its function is as follows. Participates in electron transfer between P700 and the cytochrome b6-f complex in photosystem I. This is Plastocyanin, chloroplastic (PETE) from Silene latifolia subsp. alba (White campion).